Consider the following 702-residue polypeptide: Ribosomal RNA large subunit methyltransferase K/L (702 aa).

The THUMP domain maps to 43-154 (LIYQSLMWSR…KETASIALDL (112 aa)).

Belongs to the methyltransferase superfamily. RlmKL family.

Its subcellular location is the cytoplasm. The enzyme catalyses guanosine(2445) in 23S rRNA + S-adenosyl-L-methionine = N(2)-methylguanosine(2445) in 23S rRNA + S-adenosyl-L-homocysteine + H(+). The catalysed reaction is guanosine(2069) in 23S rRNA + S-adenosyl-L-methionine = N(2)-methylguanosine(2069) in 23S rRNA + S-adenosyl-L-homocysteine + H(+). Its function is as follows. Specifically methylates the guanine in position 2445 (m2G2445) and the guanine in position 2069 (m7G2069) of 23S rRNA. The chain is Ribosomal RNA large subunit methyltransferase K/L from Salmonella paratyphi B (strain ATCC BAA-1250 / SPB7).